Consider the following 251-residue polypeptide: Large ribosomal subunit protein uL16m (251 aa).

The transit peptide at 1–29 directs the protein to the mitochondrion; the sequence is MWRLLTRAPAPLWRMHFSDTWAALPTSAG.

The protein belongs to the universal ribosomal protein uL16 family. Component of the mitochondrial ribosome large subunit (39S) which comprises a 16S rRNA and about 50 distinct proteins.

It localises to the mitochondrion. The protein is Large ribosomal subunit protein uL16m (Mrpl16) of Rattus norvegicus (Rat).